The sequence spans 232 residues: (S)-2-haloacid dehalogenase (232 aa).

The active-site Nucleophile is the aspartate 10. Residues leucine 11–tyrosine 12, arginine 41, and serine 118–asparagine 119 contribute to the an (S)-2-haloacid site. Residues serine 175–aspartate 180 form an important for catalytic activity region.

This sequence belongs to the HAD-like hydrolase superfamily. S-2-haloalkanoic acid dehalogenase family. In terms of assembly, homodimer.

The catalysed reaction is an (S)-2-haloacid + H2O = a (2R)-2-hydroxycarboxylate + a halide anion + H(+). The enzyme catalyses (S)-2-chloropropanoate + H2O = (R)-lactate + chloride + H(+). Catalyzes the hydrolytic dehalogenation of small (S)-2-haloalkanoic acids to yield the corresponding (R)-2-hydroxyalkanoic acids. Acts on acids of short chain lengths, C(2) to C(4), with inversion of configuration at C-2. Active with 2-halogenated carboxylic acids and converts only the S-isomer (or L-isomer) of 2-chloropropionic acid with inversion of configuration to produce R-lactate (or D-isomer). The sequence is that of (S)-2-haloacid dehalogenase from Pseudomonas sp. (strain YL).